The sequence spans 271 residues: RELT-like protein 1 (271 aa).

The first 23 residues, 1-23 (MAPRGLPGSAVLAAAVFVGGAVS), serve as a signal peptide directing secretion. Topologically, residues 24 to 57 (SPLVRSDHSGSHPLPSKTETTPSPTNNNGNGHPE) are extracellular. A disordered region spans residues 27–52 (VRSDHSGSHPLPSKTETTPSPTNNNG). Residues 36–52 (PLPSKTETTPSPTNNNG) show a composition bias toward low complexity. Residues 58–78 (YIAYALVPVFFVMGLFGVLIC) traverse the membrane as a helical segment. Topologically, residues 79–271 (HLLKKKGYRC…PVKRQQSDSE (193 aa)) are cytoplasmic. Residues Ser-109 and Ser-114 each carry the phosphoserine modification. Disordered regions lie at residues 144-168 (CDPE…LSPG) and 231-271 (TKVE…SDSE). Residues 155-165 (PGSPPVSPGPL) are compositionally biased toward pro residues. The segment covering 231 to 244 (TKVEPKSNQKERRS) has biased composition (basic and acidic residues). Ser-244 and Ser-247 each carry phosphoserine.

The protein belongs to the RELT family. Interacts with RELT, RELL2, OXSR1 and PLSCR1.

The protein localises to the cell membrane. Functionally, induces activation of MAPK14/p38 cascade, when overexpressed. Induces apoptosis, when overexpressed. This is RELT-like protein 1 (RELL1) from Bos taurus (Bovine).